The following is a 389-amino-acid chain: Putative glutamate--cysteine ligase 2 (389 aa).

Belongs to the glutamate--cysteine ligase type 2 family. YbdK subfamily.

It carries out the reaction L-cysteine + L-glutamate + ATP = gamma-L-glutamyl-L-cysteine + ADP + phosphate + H(+). Its function is as follows. ATP-dependent carboxylate-amine ligase which exhibits weak glutamate--cysteine ligase activity. This chain is Putative glutamate--cysteine ligase 2, found in Rhodospirillum rubrum (strain ATCC 11170 / ATH 1.1.1 / DSM 467 / LMG 4362 / NCIMB 8255 / S1).